The following is a 393-amino-acid chain: Putative serpin-Z6A (393 aa).

The RCL stretch occupies residues 336-360 (GTEAAAATAVLMEGAARYAPPPPPR).

This sequence belongs to the serpin family.

Its function is as follows. Probable serine protease inhibitor. The chain is Putative serpin-Z6A from Oryza sativa subsp. japonica (Rice).